The sequence spans 148 residues: FAD synthase (148 aa).

ATP is bound by residues 14–15 (VF), 19–22 (HVGH), and aspartate 100.

The protein belongs to the archaeal FAD synthase family. As to quaternary structure, homodimer. It depends on a divalent metal cation as a cofactor.

The catalysed reaction is FMN + ATP + H(+) = FAD + diphosphate. The protein operates within cofactor biosynthesis; FAD biosynthesis; FAD from FMN: step 1/1. Its function is as follows. Catalyzes the transfer of the AMP portion of ATP to flavin mononucleotide (FMN) to produce flavin adenine dinucleotide (FAD) coenzyme. The chain is FAD synthase from Pyrococcus abyssi (strain GE5 / Orsay).